The sequence spans 378 residues: Erythronate-4-phosphate dehydrogenase (378 aa).

Residues serine 45 and threonine 66 each contribute to the substrate site. Positions 146 and 175 each coordinate NAD(+). Arginine 208 is a catalytic residue. Residue aspartate 232 coordinates NAD(+). Glutamate 237 is a catalytic residue. Histidine 254 (proton donor) is an active-site residue. Glycine 257 is a binding site for NAD(+). Tyrosine 258 serves as a coordination point for substrate.

It belongs to the D-isomer specific 2-hydroxyacid dehydrogenase family. PdxB subfamily. In terms of assembly, homodimer.

Its subcellular location is the cytoplasm. The catalysed reaction is 4-phospho-D-erythronate + NAD(+) = (R)-3-hydroxy-2-oxo-4-phosphooxybutanoate + NADH + H(+). It participates in cofactor biosynthesis; pyridoxine 5'-phosphate biosynthesis; pyridoxine 5'-phosphate from D-erythrose 4-phosphate: step 2/5. Functionally, catalyzes the oxidation of erythronate-4-phosphate to 3-hydroxy-2-oxo-4-phosphonooxybutanoate. This Escherichia coli O8 (strain IAI1) protein is Erythronate-4-phosphate dehydrogenase.